The chain runs to 282 residues: Bis(5'-nucleosyl)-tetraphosphatase, symmetrical (282 aa).

This sequence belongs to the Ap4A hydrolase family.

The catalysed reaction is P(1),P(4)-bis(5'-adenosyl) tetraphosphate + H2O = 2 ADP + 2 H(+). Functionally, hydrolyzes diadenosine 5',5'''-P1,P4-tetraphosphate to yield ADP. The protein is Bis(5'-nucleosyl)-tetraphosphatase, symmetrical of Salmonella arizonae (strain ATCC BAA-731 / CDC346-86 / RSK2980).